Here is a 338-residue protein sequence, read N- to C-terminus: Anthranilate phosphoribosyltransferase (338 aa).

Residues glycine 81, 84–85, threonine 89, 91–94, 109–117, and alanine 121 contribute to the 5-phospho-alpha-D-ribose 1-diphosphate site; these read GD, NIST, and KHGNRNLSS. Residue glycine 81 coordinates anthranilate. Serine 93 is a binding site for Mg(2+). Asparagine 112 lines the anthranilate pocket. Arginine 167 is a binding site for anthranilate. Aspartate 226 and glutamate 227 together coordinate Mg(2+).

This sequence belongs to the anthranilate phosphoribosyltransferase family. As to quaternary structure, homodimer. It depends on Mg(2+) as a cofactor.

The enzyme catalyses N-(5-phospho-beta-D-ribosyl)anthranilate + diphosphate = 5-phospho-alpha-D-ribose 1-diphosphate + anthranilate. Its pathway is amino-acid biosynthesis; L-tryptophan biosynthesis; L-tryptophan from chorismate: step 2/5. Catalyzes the transfer of the phosphoribosyl group of 5-phosphorylribose-1-pyrophosphate (PRPP) to anthranilate to yield N-(5'-phosphoribosyl)-anthranilate (PRA). This Cereibacter sphaeroides (strain KD131 / KCTC 12085) (Rhodobacter sphaeroides) protein is Anthranilate phosphoribosyltransferase.